The following is a 520-amino-acid chain: 2-isopropylmalate synthase (520 aa).

The region spanning V12–T274 is the Pyruvate carboxyltransferase domain. D21, H209, H211, and N245 together coordinate Mn(2+). The regulatory domain stretch occupies residues K398–S520.

It belongs to the alpha-IPM synthase/homocitrate synthase family. LeuA type 1 subfamily. As to quaternary structure, homodimer. It depends on Mn(2+) as a cofactor.

Its subcellular location is the cytoplasm. The enzyme catalyses 3-methyl-2-oxobutanoate + acetyl-CoA + H2O = (2S)-2-isopropylmalate + CoA + H(+). Its pathway is amino-acid biosynthesis; L-leucine biosynthesis; L-leucine from 3-methyl-2-oxobutanoate: step 1/4. Catalyzes the condensation of the acetyl group of acetyl-CoA with 3-methyl-2-oxobutanoate (2-ketoisovalerate) to form 3-carboxy-3-hydroxy-4-methylpentanoate (2-isopropylmalate). In Nitrobacter hamburgensis (strain DSM 10229 / NCIMB 13809 / X14), this protein is 2-isopropylmalate synthase.